Here is a 201-residue protein sequence, read N- to C-terminus: Protein CIMAP1C (201 aa).

An STPGR repeat occupies proline 171 to arginine 186. A disordered region spans residues alanine 172–arginine 201. Positions tryptophan 191 to arginine 201 are enriched in polar residues.

It belongs to the CIMAP family.

This chain is Protein CIMAP1C (CIMAP1C), found in Bos taurus (Bovine).